Consider the following 486-residue polypeptide: Glutamyl-tRNA(Gln) amidotransferase subunit A (486 aa).

Residues Lys77 and Ser152 each act as charge relay system in the active site. Ser176 serves as the catalytic Acyl-ester intermediate.

This sequence belongs to the amidase family. GatA subfamily. Heterotrimer of A, B and C subunits.

The enzyme catalyses L-glutamyl-tRNA(Gln) + L-glutamine + ATP + H2O = L-glutaminyl-tRNA(Gln) + L-glutamate + ADP + phosphate + H(+). Allows the formation of correctly charged Gln-tRNA(Gln) through the transamidation of misacylated Glu-tRNA(Gln) in organisms which lack glutaminyl-tRNA synthetase. The reaction takes place in the presence of glutamine and ATP through an activated gamma-phospho-Glu-tRNA(Gln). This is Glutamyl-tRNA(Gln) amidotransferase subunit A from Pediococcus pentosaceus (strain ATCC 25745 / CCUG 21536 / LMG 10740 / 183-1w).